A 395-amino-acid chain; its full sequence is S-adenosylmethionine synthase (395 aa).

His15 contributes to the ATP binding site. Mg(2+) is bound at residue Asp17. Position 43 (Glu43) interacts with K(+). L-methionine contacts are provided by Glu56 and Gln99. Positions 99–109 (QSADIALGVDE) are flexible loop. Residues 174 to 176 (DGK), 240 to 241 (RF), Asp249, 255 to 256 (RK), Ala272, and Lys276 contribute to the ATP site. Asp249 serves as a coordination point for L-methionine. Lys280 is a binding site for L-methionine.

Belongs to the AdoMet synthase family. As to quaternary structure, homotetramer; dimer of dimers. The cofactor is Mg(2+). Requires K(+) as cofactor.

It localises to the cytoplasm. The catalysed reaction is L-methionine + ATP + H2O = S-adenosyl-L-methionine + phosphate + diphosphate. It functions in the pathway amino-acid biosynthesis; S-adenosyl-L-methionine biosynthesis; S-adenosyl-L-methionine from L-methionine: step 1/1. Its function is as follows. Catalyzes the formation of S-adenosylmethionine (AdoMet) from methionine and ATP. The overall synthetic reaction is composed of two sequential steps, AdoMet formation and the subsequent tripolyphosphate hydrolysis which occurs prior to release of AdoMet from the enzyme. The polypeptide is S-adenosylmethionine synthase (Alkaliphilus oremlandii (strain OhILAs) (Clostridium oremlandii (strain OhILAs))).